We begin with the raw amino-acid sequence, 217 residues long: Uridylate kinase (217 aa).

6–10 (KISGR) provides a ligand contact to ATP. A UMP-binding site is contributed by G38. The ATP site is built by G39 and R43. UMP-binding positions include D60 and 107–113 (FQPGQST). ATP-binding residues include N134, Y139, and D142.

Belongs to the UMP kinase family. Homohexamer.

It localises to the cytoplasm. The catalysed reaction is UMP + ATP = UDP + ADP. The protein operates within pyrimidine metabolism; CTP biosynthesis via de novo pathway; UDP from UMP (UMPK route): step 1/1. Its activity is regulated as follows. Inhibited by UTP. Catalyzes the reversible phosphorylation of UMP to UDP. In Pyrobaculum arsenaticum (strain DSM 13514 / JCM 11321 / PZ6), this protein is Uridylate kinase.